A 503-amino-acid chain; its full sequence is ATP synthase subunit alpha (503 aa).

An ATP-binding site is contributed by 170–177; sequence GDKQTGKT.

Belongs to the ATPase alpha/beta chains family. F-type ATPases have 2 components, CF(1) - the catalytic core - and CF(0) - the membrane proton channel. CF(1) has five subunits: alpha(3), beta(3), gamma(1), delta(1), epsilon(1). CF(0) has three main subunits: a(1), b(2) and c(9-12). The alpha and beta chains form an alternating ring which encloses part of the gamma chain. CF(1) is attached to CF(0) by a central stalk formed by the gamma and epsilon chains, while a peripheral stalk is formed by the delta and b chains.

Its subcellular location is the cell inner membrane. It carries out the reaction ATP + H2O + 4 H(+)(in) = ADP + phosphate + 5 H(+)(out). Functionally, produces ATP from ADP in the presence of a proton gradient across the membrane. The alpha chain is a regulatory subunit. This chain is ATP synthase subunit alpha, found in Helicobacter pylori (strain Shi470).